The sequence spans 263 residues: 3-methyl-2-oxobutanoate hydroxymethyltransferase (263 aa).

Aspartate 44 and aspartate 83 together coordinate Mg(2+). Residues 44-45 (DS), aspartate 83, and lysine 113 contribute to the 3-methyl-2-oxobutanoate site. Glutamate 115 contributes to the Mg(2+) binding site. Catalysis depends on glutamate 183, which acts as the Proton acceptor.

It belongs to the PanB family. As to quaternary structure, homodecamer; pentamer of dimers. The cofactor is Mg(2+).

It localises to the cytoplasm. It catalyses the reaction 3-methyl-2-oxobutanoate + (6R)-5,10-methylene-5,6,7,8-tetrahydrofolate + H2O = 2-dehydropantoate + (6S)-5,6,7,8-tetrahydrofolate. The protein operates within cofactor biosynthesis; (R)-pantothenate biosynthesis; (R)-pantoate from 3-methyl-2-oxobutanoate: step 1/2. Functionally, catalyzes the reversible reaction in which hydroxymethyl group from 5,10-methylenetetrahydrofolate is transferred onto alpha-ketoisovalerate to form ketopantoate. This Trichodesmium erythraeum (strain IMS101) protein is 3-methyl-2-oxobutanoate hydroxymethyltransferase.